The chain runs to 421 residues: BEN domain-containing protein 5 (421 aa).

N6-acetyllysine is present on Lys133. Residues 180–243 (RALYEELLRN…LNRRLQDVLL (64 aa)) are a coiled coil. Lys258 participates in a covalent cross-link: Glycyl lysine isopeptide (Lys-Gly) (interchain with G-Cter in SUMO2). A BEN domain is found at 302 to 408 (GSGIWVDEEK…EKIMDINKSC (107 aa)).

Acts as a transcriptional repressor. The sequence is that of BEN domain-containing protein 5 (Bend5) from Mus musculus (Mouse).